Consider the following 282-residue polypeptide: uncharacterized protein (282 aa).

Tyr50 serves as the catalytic Proton donor. His115 is a substrate binding site.

It belongs to the aldo/keto reductase family.

This is an uncharacterized protein from Saccharomyces cerevisiae (strain ATCC 204508 / S288c) (Baker's yeast).